The primary structure comprises 181 residues: Peptide deformylase (181 aa).

Fe cation contacts are provided by Cys99 and His141. The active site involves Glu142. His145 contributes to the Fe cation binding site.

The protein belongs to the polypeptide deformylase family. Requires Fe(2+) as cofactor.

The enzyme catalyses N-terminal N-formyl-L-methionyl-[peptide] + H2O = N-terminal L-methionyl-[peptide] + formate. Removes the formyl group from the N-terminal Met of newly synthesized proteins. Requires at least a dipeptide for an efficient rate of reaction. N-terminal L-methionine is a prerequisite for activity but the enzyme has broad specificity at other positions. The polypeptide is Peptide deformylase (Chlamydia muridarum (strain MoPn / Nigg)).